We begin with the raw amino-acid sequence, 505 residues long: Activin receptor type-1B (505 aa).

The signal sequence occupies residues 1 to 23 (MAESAGASSFFPLVVLLLAGSGG). At 24–126 (SGPRGIQALL…AHPSMWGPVE (103 aa)) the chain is on the extracellular side. Residue Asn43 is glycosylated (N-linked (GlcNAc...) asparagine). A helical transmembrane segment spans residues 127 to 149 (LVGIIAGPVFLLFLIIIIVFLVI). The Cytoplasmic portion of the chain corresponds to 150 to 505 (NYHQRVYHNR…QLSVQEDVKI (356 aa)). One can recognise a GS domain in the interval 177–206 (KTLQDLVYDLSTSGSGSGLPLFVQRTVART). The Protein kinase domain occupies 207-497 (IVLQEIIGKG…LRIKKTLSQL (291 aa)). ATP-binding positions include 213 to 221 (IGKGRFGEV) and Lys234. Asp335 serves as the catalytic Proton acceptor. Phosphotyrosine is present on Tyr380.

Belongs to the protein kinase superfamily. TKL Ser/Thr protein kinase family. TGFB receptor subfamily. As to quaternary structure, forms an activin receptor complex with activin receptor type-2 (ACVR2A or ACVR2B). Part of a complex consisting of MAGI2/ARIP1, ACVR2A, ACVR1B and SMAD3. Interacts with SMAD2 and SMAD3. Interacts with SMAD7. Interacts with FKBP1A. Interacts with IGSF1. Interacts with CRIPTO. Interacts with TDP2. Interacts with TSC22D1/TSC-22. Autophosphorylated. Phosphorylated by activin receptor type-2 (ACVR2A or ACVR2B) in response to activin-binding at serine and threonine residues in the GS domain. Phosphorylation of ACVR1B by activin receptor type-2 regulates association with SMAD7. Post-translationally, ubiquitinated. Level of ubiquitination is regulated by the SMAD7-SMURF1 complex. In terms of processing, ubiquitinated.

The protein resides in the cell membrane. The enzyme catalyses L-threonyl-[receptor-protein] + ATP = O-phospho-L-threonyl-[receptor-protein] + ADP + H(+). The catalysed reaction is L-seryl-[receptor-protein] + ATP = O-phospho-L-seryl-[receptor-protein] + ADP + H(+). With respect to regulation, activin receptor type-2 (ACVR2A or ACVR2B) activates the type-1 receptor through phosphorylation of its regulatory GS domain. Transmembrane serine/threonine kinase activin type-1 receptor forming an activin receptor complex with activin receptor type-2 (ACVR2A or ACVR2B). Transduces the activin signal from the cell surface to the cytoplasm and is thus regulating a many physiological and pathological processes including neuronal differentiation and neuronal survival, hair follicle development and cycling, FSH production by the pituitary gland, wound healing, extracellular matrix production, immunosuppression and carcinogenesis. Activin is also thought to have a paracrine or autocrine role in follicular development in the ovary. Within the receptor complex, type-2 receptors (ACVR2A and/or ACVR2B) act as a primary activin receptors whereas the type-1 receptors like ACVR1B act as downstream transducers of activin signals. Activin binds to type-2 receptor at the plasma membrane and activates its serine-threonine kinase. The activated receptor type-2 then phosphorylates and activates the type-1 receptor such as ACVR1B. Once activated, the type-1 receptor binds and phosphorylates the SMAD proteins SMAD2 and SMAD3, on serine residues of the C-terminal tail. Soon after their association with the activin receptor and subsequent phosphorylation, SMAD2 and SMAD3 are released into the cytoplasm where they interact with the common partner SMAD4. This SMAD complex translocates into the nucleus where it mediates activin-induced transcription. Inhibitory SMAD7, which is recruited to ACVR1B through FKBP1A, can prevent the association of SMAD2 and SMAD3 with the activin receptor complex, thereby blocking the activin signal. Activin signal transduction is also antagonized by the binding to the receptor of inhibin-B via the IGSF1 inhibin coreceptor. ACVR1B also phosphorylates TDP2. This is Activin receptor type-1B (Acvr1b) from Mus musculus (Mouse).